The following is a 1305-amino-acid chain: Cyclin-G-associated kinase (1305 aa).

At S2 the chain carries N-acetylserine. Phosphoserine occurs at positions 2 and 16. The 276-residue stretch at 40-315 folds into the Protein kinase domain; sequence LRVRRVLAEG…IAEVVRQLQE (276 aa). The active-site Proton acceptor is the D173. The interval 332–354 is disordered; sequence LEQNGGYGNSGPSRAQPPSGGPV. The Phosphatase tensin-type domain maps to 397 to 564; that stretch reads SVANYAKGDL…EYVCDMVAEE (168 aa). S454 is subject to Phosphoserine. Residues 570 to 708 form the C2 tensin-type domain; that stretch reads SKPMLVKSVV…FQVNLEVEVE (139 aa). The interval 747-856 is disordered; the sequence is FGKPELPRQP…TPRLAAGTRQ (110 aa). Phosphoserine is present on S768. Residue T774 is modified to Phosphothreonine. Over residues 776-789 the composition is skewed to polar residues; the sequence is SDSPQSSSTDTNHF. At S781 the chain carries Phosphoserine. Phosphothreonine is present on T792. Positions 805–817 are enriched in polar residues; that stretch reads VDNTSPKESQSNL. A phosphoserine mark is found at S809, S824, and S827. Over residues 822 to 832 the composition is skewed to acidic residues; the sequence is DGSEVSDEEEA. The span at 836-848 shows a compositional bias: basic and acidic residues; the sequence is SEERKPGAGEDTP. The residue at position 938 (S938) is a Phosphoserine. The segment at 1044-1141 is disordered; it reads LPGPASMPVP…PQAKPAPRAS (98 aa). Residues 1105–1131 show a composition bias toward polar residues; the sequence is VGTSATTHKSNSSWQTTRPTAPGTSWP. R1122 carries the post-translational modification Omega-N-methylarginine. S1171 is subject to Phosphoserine. A J domain is found at 1241 to 1305; that stretch reads SRWTPVSMAD…FENQGSRPLF (65 aa).

This sequence belongs to the protein kinase superfamily. Ser/Thr protein kinase family.

It localises to the cytoplasm. The protein localises to the perinuclear region. The protein resides in the golgi apparatus. Its subcellular location is the trans-Golgi network. It is found in the cell junction. It localises to the focal adhesion. The protein localises to the cytoplasmic vesicle. The protein resides in the clathrin-coated vesicle. It carries out the reaction L-seryl-[protein] + ATP = O-phospho-L-seryl-[protein] + ADP + H(+). It catalyses the reaction L-threonyl-[protein] + ATP = O-phospho-L-threonyl-[protein] + ADP + H(+). Its function is as follows. Associates with cyclin G and CDK5. Seems to act as an auxilin homolog that is involved in the uncoating of clathrin-coated vesicles by Hsc70 in non-neuronal cells. Expression oscillates slightly during the cell cycle, peaking at G1. May play a role in clathrin-mediated endocytosis and intracellular trafficking, and in the dynamics of clathrin assembly/disassembly. This Rattus norvegicus (Rat) protein is Cyclin-G-associated kinase.